Reading from the N-terminus, the 341-residue chain is Nucleoid-associated protein Sden_2335 (341 aa).

It belongs to the YejK family.

The protein localises to the cytoplasm. It is found in the nucleoid. The sequence is that of Nucleoid-associated protein Sden_2335 from Shewanella denitrificans (strain OS217 / ATCC BAA-1090 / DSM 15013).